The sequence spans 400 residues: Probable transposase for insertion sequence element ISRM3-like (400 aa).

This sequence belongs to the transposase mutator family.

In terms of biological role, required for the transposition of the insertion element. The chain is Probable transposase for insertion sequence element ISRM3-like from Sinorhizobium fredii (strain NBRC 101917 / NGR234).